Consider the following 117-residue polypeptide: uncharacterized protein (117 aa).

The tract at residues 96-117 (RKGGASKHRTLSAETGIRGEGE) is disordered.

This is an uncharacterized protein from Saccharomyces cerevisiae (strain ATCC 204508 / S288c) (Baker's yeast).